A 101-amino-acid polypeptide reads, in one-letter code: NADH-quinone oxidoreductase subunit K (101 aa).

A run of 3 helical transmembrane segments spans residues 4 to 24 (LSHY…GIFL), 30 to 50 (IVLL…FIAF), and 61 to 81 (VFVF…LAIL).

Belongs to the complex I subunit 4L family. NDH-1 is composed of 14 different subunits. Subunits NuoA, H, J, K, L, M, N constitute the membrane sector of the complex.

Its subcellular location is the cell inner membrane. The catalysed reaction is a quinone + NADH + 5 H(+)(in) = a quinol + NAD(+) + 4 H(+)(out). In terms of biological role, NDH-1 shuttles electrons from NADH, via FMN and iron-sulfur (Fe-S) centers, to quinones in the respiratory chain. The immediate electron acceptor for the enzyme in this species is believed to be ubiquinone. Couples the redox reaction to proton translocation (for every two electrons transferred, four hydrogen ions are translocated across the cytoplasmic membrane), and thus conserves the redox energy in a proton gradient. In Azoarcus sp. (strain BH72), this protein is NADH-quinone oxidoreductase subunit K.